Here is a 152-residue protein sequence, read N- to C-terminus: Methylglyoxal synthase (152 aa).

In terms of domain architecture, MGS-like spans 6–152; that stretch reads RKISARKSIA…YDGYLAERLA (147 aa). Residues His19, Lys23, 45–48, and 65–66 each bind substrate; these read TGTT and SG. The active-site Proton donor/acceptor is Asp71. Substrate is bound at residue His98.

The protein belongs to the methylglyoxal synthase family.

It catalyses the reaction dihydroxyacetone phosphate = methylglyoxal + phosphate. In terms of biological role, catalyzes the formation of methylglyoxal from dihydroxyacetone phosphate. In Actinobacillus pleuropneumoniae serotype 3 (strain JL03), this protein is Methylglyoxal synthase.